The primary structure comprises 317 residues: Melanocyte-stimulating hormone receptor (317 aa).

At 1 to 37 (MRVQGSQRRLLGSLNSTPTATPHLGLAANQTGARCLE) the chain is on the extracellular side. Asparagine 29 carries an N-linked (GlcNAc...) asparagine glycan. Residues 38–63 (VSIPDGLFLSLGLVSLVENVLVVTAI) traverse the membrane as a helical segment. Topologically, residues 64-72 (AKNRNLHSP) are cytoplasmic. Residues 73-93 (MYCFICCLALSDLLVSGSNML) form a helical membrane-spanning segment. Topologically, residues 94–118 (ETAVTLLLEAGALAARAAVVQQLDN) are extracellular. A helical membrane pass occupies residues 119 to 140 (VIDVITCSSMLSSLCFLGAIAV). Residues 141–163 (DRYISIFYALRYHSIVTLPRARR) are Cytoplasmic-facing. Residues 164-183 (AIAAIWVASVLCSTLFIAYY) form a helical membrane-spanning segment. Over 184-191 (DHAAVLLC) the chain is Extracellular. A helical membrane pass occupies residues 192–211 (LVVFFLAMLVLMAVLYVHML). Over 212-240 (ARACQHAQGIARLHKRQRLAHQGFGLKGA) the chain is Cytoplasmic. A helical membrane pass occupies residues 241-266 (ATLTILLGIFFLCWGPFFLHLTLIVL). Residues 267–279 (CPQHPTCSCIFKN) are Extracellular-facing. The chain crosses the membrane as a helical span at residues 280–300 (FNLFLALIICNAIIDPLIYAF). Over 301 to 317 (RSQELRRTLKEVLLCSW) the chain is Cytoplasmic. A lipid anchor (S-palmitoyl cysteine) is attached at cysteine 315.

The protein belongs to the G-protein coupled receptor 1 family. Interacts with MGRN1, but does not undergo MGRN1-mediated ubiquitination; this interaction competes with GNAS-binding and thus inhibits agonist-induced cAMP production. Interacts with OPN3; the interaction results in a decrease in MC1R-mediated cAMP signaling and ultimately a decrease in melanin production in melanocytes.

It localises to the cell membrane. In terms of biological role, receptor for MSH (alpha, beta and gamma) and ACTH. The activity of this receptor is mediated by G proteins which activate adenylate cyclase. Mediates melanogenesis, the production of eumelanin (black/brown) and phaeomelanin (red/yellow), via regulation of cAMP signaling in melanocytes. This is Melanocyte-stimulating hormone receptor (MC1R) from Macaca nigra (Celebes black macaque).